A 258-amino-acid polypeptide reads, in one-letter code: Synapse differentiation-inducing gene protein 1 (258 aa).

The Cytoplasmic portion of the chain corresponds to 1 to 181; it reads MAGVVEQKSG…NFLVMPPRDH (181 aa). Position 137 is a phosphoserine (Ser137). The chain crosses the membrane as a helical span at residues 182–202; the sequence is LGLSVFSMLCCFWPLGIAAFY. Topologically, residues 203-228 are extracellular; it reads LSHETNKAVAKGDFHQASTSSRRALF. Residues 229–249 constitute an intramembrane region (helical); sequence LAVLSITIGTGIYVGVAVALI. Residues 250–258 are Extracellular-facing; the sequence is AYLSKSNHL.

It belongs to the CD225/Dispanin family. As to quaternary structure, homodimer. Interacts with GRIA1 and GRIA2.

It is found in the cell membrane. Its subcellular location is the early endosome membrane. The protein resides in the postsynaptic density membrane. It localises to the synapse. The protein localises to the cell projection. It is found in the dendrite. Its subcellular location is the dendritic spine. May regulate AMPA receptor content at nascent synapses, and have a role in postsynaptic development and maturation. This Bos taurus (Bovine) protein is Synapse differentiation-inducing gene protein 1 (SYNDIG1).